A 582-amino-acid polypeptide reads, in one-letter code: Protein NRT1/ PTR FAMILY 5.2 (582 aa).

11 helical membrane-spanning segments follow: residues 77–97 (WVGT…ALLG), 100–120 (ITFV…TLSV), 141–161 (ASVL…IGTG), 189–209 (FFNW…TVLV), 217–237 (WTLG…IFLL), 334–354 (PVLF…TLFV), 370–390 (IPPA…IVLY), 408–428 (ITLL…MIVA), 452–472 (LPLT…ADSF), 493–515 (GTSY…LSTV), and 538–558 (YYYL…LVVV).

The protein belongs to the major facilitator superfamily. Proton-dependent oligopeptide transporter (POT/PTR) (TC 2.A.17) family. In terms of tissue distribution, expressed in roots. Detected in shoots, leaves and flowers.

The protein resides in the membrane. Peptide transporter involved in stress tolerance in seeds during germination and in defense against virulent bacterial pathogens. This is Protein NRT1/ PTR FAMILY 5.2 (NPF5.2) from Arabidopsis thaliana (Mouse-ear cress).